The following is a 619-amino-acid chain: (-)-camphene synthase, chloroplastic (619 aa).

Residues 1-47 constitute a chloroplast transit peptide; that stretch reads MALVSVAPLVSMRRSLFSSPYELKSIDKTIPNLVMCRKRMSGTPSIR. Mg(2+) contacts are provided by D370, D374, and D522. A DDXXD motif motif is present at residues 370–374; it reads DDIYD.

It belongs to the terpene synthase family. Tpsd subfamily. Mg(2+) serves as cofactor. The cofactor is Mn(2+).

The protein localises to the plastid. Its subcellular location is the chloroplast. The enzyme catalyses (2E)-geranyl diphosphate = (1S,4R)-camphene + diphosphate. The catalysed reaction is (2E)-geranyl diphosphate = (1R,5R)-alpha-pinene + diphosphate. It catalyses the reaction (2E)-geranyl diphosphate = tricyclene + diphosphate. It carries out the reaction (2E)-geranyl diphosphate = beta-myrcene + diphosphate. The enzyme catalyses (2E)-geranyl diphosphate = (1S,5S)-beta-pinene + diphosphate. The catalysed reaction is (2E)-geranyl diphosphate = (1S,5S)-alpha-pinene + diphosphate. The protein operates within terpene metabolism; oleoresin biosynthesis. It participates in secondary metabolite biosynthesis; terpenoid biosynthesis. Functionally, monoterpene synthase (TPS) involved in the biosynthesis of monoterpene natural products included in conifer oleoresin secretions and volatile emissions; these compounds contribute to biotic and abiotic stress defense against herbivores and pathogens. Catalyzes the conversion of (2E)-geranyl diphosphate (GPP) to (-)-camphene, (+)-alpha-pinene and (-)-alpha-pinene, and, to a lower extent, to tricyclene, myrcene and (-)-beta-pinene. This is (-)-camphene synthase, chloroplastic from Pinus contorta (Shore pine).